A 348-amino-acid polypeptide reads, in one-letter code: Dihydroorotate dehydrogenase (quinone) (348 aa).

FMN is bound by residues 65 to 69 (AGMDK) and Thr-89. Lys-69 lines the substrate pocket. 114–118 (NRMGF) contacts substrate. Asn-143 and Asn-176 together coordinate FMN. Asn-176 lines the substrate pocket. Ser-179 acts as the Nucleophile in catalysis. Position 181 (Asn-181) interacts with substrate. FMN-binding residues include Lys-221 and Thr-249. Substrate is bound at residue 250 to 251 (NT). Residues Gly-272, Gly-301, and 322–323 (YT) each bind FMN.

It belongs to the dihydroorotate dehydrogenase family. Type 2 subfamily. In terms of assembly, monomer. FMN is required as a cofactor.

Its subcellular location is the cell membrane. The enzyme catalyses (S)-dihydroorotate + a quinone = orotate + a quinol. Its pathway is pyrimidine metabolism; UMP biosynthesis via de novo pathway; orotate from (S)-dihydroorotate (quinone route): step 1/1. Functionally, catalyzes the conversion of dihydroorotate to orotate with quinone as electron acceptor. This is Dihydroorotate dehydrogenase (quinone) from Akkermansia muciniphila (strain ATCC BAA-835 / DSM 22959 / JCM 33894 / BCRC 81048 / CCUG 64013 / CIP 107961 / Muc).